Consider the following 87-residue polypeptide: Small archaeal modifier protein 1 (87 aa).

Glycine 87 bears the 1-thioglycine; alternate mark. Glycine 87 is modified (glycyl adenylate; alternate). A Glycyl lysine isopeptide (Gly-Lys) (interchain with K-? in acceptor proteins); alternate cross-link involves residue glycine 87.

Post-translationally, the C-terminal glycine is likely acyl-adenylated (-COAMP) by UbaA, and also probably thiocarboxylated (-COSH) to function in sulfur transfer.

Its function is as follows. Functions as a protein modifier covalently attached to lysine residues of substrate proteins, as well as a sulfur carrier in molybdenum cofactor (MoCo) biosynthesis. The protein modification process is termed sampylation and involves the formation of an isopeptide bond between the SAMP1 C-terminal glycine carboxylate and the epsilon-amino group of lysine residues on target proteins. May serve as a proteolytic signal in the cell to target proteins for degradation by proteasomes. This Haloferax volcanii (strain ATCC 29605 / DSM 3757 / JCM 8879 / NBRC 14742 / NCIMB 2012 / VKM B-1768 / DS2) (Halobacterium volcanii) protein is Small archaeal modifier protein 1 (samp1).